A 69-amino-acid polypeptide reads, in one-letter code: Small, acid-soluble spore protein A (69 aa).

Belongs to the alpha/beta-type SASP family.

SASP are bound to spore DNA. They are double-stranded DNA-binding proteins that cause DNA to change to an a-like conformation. They protect the DNA backbone from chemical and enzymatic cleavage and are thus involved in dormant spore's high resistance to UV light. This is Small, acid-soluble spore protein A (sspA) from Bacillus subtilis (strain 168).